The sequence spans 694 residues: 4-alpha-glucanotransferase (694 aa).

It belongs to the disproportionating enzyme family.

The protein localises to the cytoplasm. The catalysed reaction is Transfers a segment of a (1-&gt;4)-alpha-D-glucan to a new position in an acceptor, which may be glucose or a (1-&gt;4)-alpha-D-glucan.. The chain is 4-alpha-glucanotransferase (malQ) from Escherichia coli (strain K12).